Consider the following 533-residue polypeptide: Putative phosphate permease jhp_1384 (533 aa).

12 consecutive transmembrane segments (helical) span residues 23–43, 47–67, 81–101, 129–149, 156–176, 182–202, 221–241, 248–268, 286–306, 338–358, 372–392, and 509–529; these read IALA…FGQA, GLLL…IGAN, AISM…GAII, VMLA…LIGA, SVVG…AINW, IVAS…FFLM, VVPY…IVKV, VGFE…FILF, VNEL…FAHG, VPLW…SLYG, LDKM…LLAS, and LVTV…LGFI.

This sequence belongs to the inorganic phosphate transporter (PiT) (TC 2.A.20) family.

It is found in the cell membrane. Its function is as follows. Potential transporter for phosphate. The sequence is that of Putative phosphate permease jhp_1384 from Helicobacter pylori (strain J99 / ATCC 700824) (Campylobacter pylori J99).